The following is a 1496-amino-acid chain: DNA-directed RNA polymerase subunit beta' (1496 aa).

Cysteine 67, cysteine 69, cysteine 82, and cysteine 85 together coordinate Zn(2+). Residues aspartate 499, aspartate 501, and aspartate 503 each contribute to the Mg(2+) site. Residues cysteine 867, cysteine 943, cysteine 950, and cysteine 953 each contribute to the Zn(2+) site.

Belongs to the RNA polymerase beta' chain family. In terms of assembly, the RNAP catalytic core consists of 2 alpha, 1 beta, 1 beta' and 1 omega subunit. When a sigma factor is associated with the core the holoenzyme is formed, which can initiate transcription. The cofactor is Mg(2+). Zn(2+) is required as a cofactor.

The enzyme catalyses RNA(n) + a ribonucleoside 5'-triphosphate = RNA(n+1) + diphosphate. Its function is as follows. DNA-dependent RNA polymerase catalyzes the transcription of DNA into RNA using the four ribonucleoside triphosphates as substrates. The protein is DNA-directed RNA polymerase subunit beta' of Chlorobium limicola (strain DSM 245 / NBRC 103803 / 6330).